A 322-amino-acid chain; its full sequence is Ribosomal RNA small subunit methyltransferase H (322 aa).

S-adenosyl-L-methionine contacts are provided by residues glycine 47–histidine 49, aspartate 67, phenylalanine 93, aspartate 112, and glutamine 119.

It belongs to the methyltransferase superfamily. RsmH family.

The protein localises to the cytoplasm. It catalyses the reaction cytidine(1402) in 16S rRNA + S-adenosyl-L-methionine = N(4)-methylcytidine(1402) in 16S rRNA + S-adenosyl-L-homocysteine + H(+). Its function is as follows. Specifically methylates the N4 position of cytidine in position 1402 (C1402) of 16S rRNA. This chain is Ribosomal RNA small subunit methyltransferase H, found in Stenotrophomonas maltophilia (strain K279a).